Reading from the N-terminus, the 604-residue chain is 3-hydroxy-3-methylglutaryl-coenzyme A reductase (604 aa).

A disordered region spans residues Met-1 to Gln-31. A run of 2 helical transmembrane segments spans residues Ala-40 to Val-62 and Ala-90 to Val-110. The segment at Gln-111–Glu-189 is linker. The interval Asp-190–Ser-604 is catalytic. Residue Glu-283 is the Charge relay system of the active site. N-linked (GlcNAc...) asparagine glycosylation occurs at Asn-347. Lys-415 (charge relay system) is an active-site residue. N-linked (GlcNAc...) asparagine glycosylation is present at Asn-460. Asp-491 functions as the Charge relay system in the catalytic mechanism. His-589 (proton donor) is an active-site residue. N-linked (GlcNAc...) asparagine glycosylation occurs at Asn-593.

It belongs to the HMG-CoA reductase family. Found in protoplasts and leaves submitted to stress. Low levels found in apexes, anthers and roots.

The protein localises to the endoplasmic reticulum membrane. The enzyme catalyses (R)-mevalonate + 2 NADP(+) + CoA = (3S)-3-hydroxy-3-methylglutaryl-CoA + 2 NADPH + 2 H(+). Its pathway is metabolic intermediate biosynthesis; (R)-mevalonate biosynthesis; (R)-mevalonate from acetyl-CoA: step 3/3. In terms of biological role, catalyzes the synthesis of mevalonate, the specific precursor of all isoprenoid compounds present in plants. Possible role in plant defense mechanisms as well as in the cell cycle. The protein is 3-hydroxy-3-methylglutaryl-coenzyme A reductase (HMGR) of Nicotiana sylvestris (Wood tobacco).